Reading from the N-terminus, the 277-residue chain is S-formylglutathione hydrolase FrmB (277 aa).

Residues Ser-145, Asp-221, and His-254 each act as charge relay system in the active site.

It belongs to the esterase D family.

It catalyses the reaction S-formylglutathione + H2O = formate + glutathione + H(+). Functionally, serine hydrolase involved in the detoxification of formaldehyde. Hydrolyzes S-formylglutathione to glutathione and formate. The protein is S-formylglutathione hydrolase FrmB (frmB) of Escherichia coli (strain ATCC 8739 / DSM 1576 / NBRC 3972 / NCIMB 8545 / WDCM 00012 / Crooks).